A 224-amino-acid chain; its full sequence is Ribonuclease 3 (224 aa).

The RNase III domain maps to 5-127; sequence LERLCRRLNY…ILAAIYLDGG (123 aa). A Mg(2+)-binding site is contributed by Glu-40. The active site involves Asp-44. The Mg(2+) site is built by Asp-113 and Glu-116. Glu-116 is an active-site residue. The region spanning 154–224 is the DRBM domain; sequence DAKTQLQEFL…AKAMLEQLQG (71 aa).

This sequence belongs to the ribonuclease III family. As to quaternary structure, homodimer. Mg(2+) serves as cofactor.

The protein localises to the cytoplasm. It catalyses the reaction Endonucleolytic cleavage to 5'-phosphomonoester.. In terms of biological role, digests double-stranded RNA. Involved in the processing of primary rRNA transcript to yield the immediate precursors to the large and small rRNAs (23S and 16S). Processes some mRNAs, and tRNAs when they are encoded in the rRNA operon. Processes pre-crRNA and tracrRNA of type II CRISPR loci if present in the organism. The polypeptide is Ribonuclease 3 (Legionella pneumophila subsp. pneumophila (strain Philadelphia 1 / ATCC 33152 / DSM 7513)).